Consider the following 364-residue polypeptide: MSKQTVALFFGGKSAEHEISIISARSIAAQIDRNRYELSPLYIDRDGKWHASECSQQVLDTDIAALLRSGTPESAGKRLDELTAAAAGECFDFGSFLKNTDVAFIALHGSYGEDGKLQGCLDTFGIPYTGCGLTASALAMDKVLTKLCAMNAGIAVAEFMTITSCAYMANPLETIVEITKRFDWPLFVKPASLGSSVGISKVRNAEELAAALENACGLDSKALVEAAISGREIEVAVLGNSDPLASEPGEIIPGSDFYSYEDKYIKNEAKIVIPADLPEGVAEEVRKAALTVFKALGCEGMARVDFFVENGTNRVILNEINTIPGFTDISMYPMMMAASGIGFAELVEKLLLLALEKRSITHKI.

An ATP-grasp domain is found at 146-352; sequence KLCAMNAGIA…FAELVEKLLL (207 aa). 179–234 is a binding site for ATP; sequence TKRFDWPLFVKPASLGSSVGISKVRNAEELAAALENACGLDSKALVEAAISGREIE. Mg(2+) is bound by residues Asp-305, Glu-319, and Asn-321.

The protein belongs to the D-alanine--D-alanine ligase family. It depends on Mg(2+) as a cofactor. The cofactor is Mn(2+).

The protein resides in the cytoplasm. It carries out the reaction 2 D-alanine + ATP = D-alanyl-D-alanine + ADP + phosphate + H(+). Its pathway is cell wall biogenesis; peptidoglycan biosynthesis. Cell wall formation. This chain is D-alanine--D-alanine ligase, found in Chlorobaculum tepidum (strain ATCC 49652 / DSM 12025 / NBRC 103806 / TLS) (Chlorobium tepidum).